Reading from the N-terminus, the 1014-residue chain is Probable transport protein MmpL11 (1014 aa).

The next 12 helical transmembrane spans lie at 13-33 (WLVF…AMTQ), 156-173 (VRLY…VAAN), 188-208 (IILI…VPLA), 235-255 (TSTV…FILM), 279-299 (GLAV…IYLI), 311-331 (AILA…AALA), 373-393 (ASAA…MMLG), 530-550 (TEPL…LISI), 560-580 (VLMT…VFQW), 598-618 (VPPL…IFLL), 649-669 (AALI…PLVA), and 671-691 (IGVA…LVLV). The interval 783 to 802 (SDRVLPGAATQESEEDPAMG) is disordered.

The protein belongs to the resistance-nodulation-cell division (RND) (TC 2.A.6) family. MmpL subfamily.

The protein resides in the cell membrane. This Mycobacterium leprae (strain TN) protein is Probable transport protein MmpL11 (mmpL11).